We begin with the raw amino-acid sequence, 258 residues long: MSASRIRAKCFRLGQRCHTRFYDVLKKDIDNVRRGFADAFNPRLAKLLSPLSHVDVQRAVRISMSFEVNLGRRRPDCVCIIQTESSGAGKTVCFIVELKSCRFSANIHTPTKYHQFCEGMRQLRDTVALIKETTPTGSDEIMVTPLLVFVSQRGLNLLQVTRLPPKVIHGNLVMLASHLENVAEYTPPIRSVRERRRLCKKKIHVCSLAKKRAKSCHRSALTKFEENAACGVDLPLRRPSLGACGGILQSITGMFSHG.

The protein belongs to the herpesviridae UL24 family.

The protein resides in the virion. It localises to the host cytoplasm. It is found in the host nucleus. Its subcellular location is the host nucleolus. The protein localises to the host Golgi apparatus. Functionally, may participate in nuclear egress of viral particles. Plays a role in the dispersal of several host nucleolar proteins including NCL/nucleolin and NPM1. Since deletion of host NCL/nucleolin negatively impact on nuclear egress, UL24 supposedly acts on this process through its effect on host nucleoli. The polypeptide is Protein UL24 homolog (Homo sapiens (Human)).